Reading from the N-terminus, the 115-residue chain is Large ribosomal subunit protein uL22 (115 aa).

It belongs to the universal ribosomal protein uL22 family. As to quaternary structure, part of the 50S ribosomal subunit.

This protein binds specifically to 23S rRNA; its binding is stimulated by other ribosomal proteins, e.g. L4, L17, and L20. It is important during the early stages of 50S assembly. It makes multiple contacts with different domains of the 23S rRNA in the assembled 50S subunit and ribosome. Its function is as follows. The globular domain of the protein is located near the polypeptide exit tunnel on the outside of the subunit, while an extended beta-hairpin is found that lines the wall of the exit tunnel in the center of the 70S ribosome. The sequence is that of Large ribosomal subunit protein uL22 (rplV) from Wolbachia pipientis wMel.